The primary structure comprises 453 residues: Glutamyl-tRNA(Gln) amidotransferase subunit A (453 aa).

Active-site charge relay system residues include Lys-56 and Ser-131. Residue Ser-155 is the Acyl-ester intermediate of the active site.

It belongs to the amidase family. GatA subfamily. Heterotrimer of A, B and C subunits.

The enzyme catalyses L-glutamyl-tRNA(Gln) + L-glutamine + ATP + H2O = L-glutaminyl-tRNA(Gln) + L-glutamate + ADP + phosphate + H(+). Functionally, allows the formation of correctly charged Gln-tRNA(Gln) through the transamidation of misacylated Glu-tRNA(Gln) in organisms which lack glutaminyl-tRNA synthetase. The reaction takes place in the presence of glutamine and ATP through an activated gamma-phospho-Glu-tRNA(Gln). The chain is Glutamyl-tRNA(Gln) amidotransferase subunit A from Campylobacter jejuni subsp. jejuni serotype O:6 (strain 81116 / NCTC 11828).